The primary structure comprises 321 residues: Thylakoid-associated protein sll1697 (321 aa).

It localises to the cellular thylakoid membrane. The polypeptide is Thylakoid-associated protein sll1697 (Synechocystis sp. (strain ATCC 27184 / PCC 6803 / Kazusa)).